A 3230-amino-acid chain; its full sequence is Helicase SRCAP (3230 aa).

The interval 1 to 71 is disordered; it reads MQSSPSPAHP…GPPDGATVPL (71 aa). A compositionally biased stretch (low complexity) spans 26 to 41; the sequence is GSNPVSPASSSSPASS. Positions 124-196 constitute an HSA domain; sequence LPKVPEPPRP…EQAKLRRIAS (73 aa). Disordered regions lie at residues 253–547 and 559–581; these read QPLT…EEDD and EEQS…LGPK. A compositionally biased stretch (low complexity) spans 257–273; the sequence is SSKAGSSPCLGSSSAAS. Acidic residues predominate over residues 283 to 313; the sequence is DDEDGDFQPQEDEEEDDEETIEVEEQQEGND. The segment covering 315–329 has biased composition (basic and acidic residues); it reads EAQRREIELLRREGE. A compositionally biased stretch (low complexity) spans 337–356; the sequence is RSLPPQLLEGPSSPSQTPSS. Residues 397–425 are compositionally biased toward acidic residues; that stretch reads DEDDEEFTANEEEAEDEEDTIAAEEQLEG. The segment covering 426–441 has biased composition (basic and acidic residues); it reads EVDHAMELSELAREGE. Composition is skewed to acidic residues over residues 462-490, 503-517, and 524-533; these read SEDE…EPPQ, RSED…EEET, and EESESEESED. In terms of domain architecture, Helicase ATP-binding spans 630–795; it reads VTMYEKKLNG…WSLMHFLMPH (166 aa). An ATP-binding site is contributed by 643–650; that stretch reads DEMGLGKT. Disordered stretches follow at residues 1017–1045, 1058–1125, and 1138–1166; these read APLG…PQVL, PPLI…PGSS, and TFPP…TPAP. Pro residues-rich tracts occupy residues 1018–1030 and 1058–1076; these read PLGP…PPGP and PPLI…PPLQ. A compositionally biased stretch (low complexity) spans 1093 to 1107; that stretch reads LSGTSRPPTPTLSLK. The span at 1108-1123 shows a compositional bias: pro residues; sequence PTPPAPVRLSPAPPPG. A compositionally biased stretch (low complexity) spans 1138–1160; sequence TFPPAAATTTSTTTATATTTAVP. Ser-1172 carries the phosphoserine modification. 4 disordered regions span residues 1320-1366, 1406-1425, 1629-1760, and 1839-1893; these read GLTP…APMP, SLPG…PLAS, VPVM…ASPV, and SRLP…EEKR. Residues 1323–1336 are compositionally biased toward pro residues; it reads PVPPLAPAPRPPSS. Low complexity predominate over residues 1337–1360; that stretch reads GLPAVLNPRPTLTPGRLPTPTLGT. Residues 1675 to 1691 are compositionally biased toward low complexity; sequence PASTQTLALAPALAPTL. Positions 1692–1733 are enriched in polar residues; sequence GGSSPSQTLSLGTGNPQGPFPTQTLSLTPASSLVPTPAQTLS. A compositionally biased stretch (pro residues) spans 1750 to 1760; the sequence is PAPPLAPASPV. The 154-residue stretch at 2044-2197 folds into the Helicase C-terminal domain; it reads KLQTLAVLLR…DMAIEGGNFT (154 aa). 6 disordered regions span residues 2214–2233, 2271–2298, 2327–2453, 2564–2583, 2598–3081, and 3095–3230; these read LEEP…EETV, FNEN…MSRA, VSRE…APAA, LELA…VPPK, KNLS…GRKS, and DLAD…KAKT. Residues 2215 to 2225 show a composition bias toward low complexity; it reads EEPSSSSVPSA. 3 stretches are compositionally biased toward basic and acidic residues: residues 2284–2298, 2327–2358, and 2386–2403; these read EAGR…MSRA, VSRE…RLPQ, and KAPE…RGAR. Residues 2438–2448 show a composition bias toward pro residues; it reads RPAPRPRPTPA. Composition is skewed to low complexity over residues 2564–2579 and 2600–2611; these read LELA…SLSL and LSLTPSAPSLTL. Residues 2669 to 2679 are compositionally biased toward basic and acidic residues; the sequence is EADRTSEELTE. The span at 2694-2712 shows a compositional bias: low complexity; the sequence is VTAEVAAPSTSSSATSSPE. A compositionally biased stretch (polar residues) spans 2782–2794; the sequence is SETSASPGSPSVR. Positions 2807 to 2817 are enriched in low complexity; it reads GPCEAAPSSSL. The segment covering 2856–2868 has biased composition (basic residues); that stretch reads VKRRRGRPPKKNR. The a.T hook 1 DNA-binding region spans 2857-2869; the sequence is KRRRGRPPKKNRS. Positions 2913 to 2926 are enriched in pro residues; that stretch reads IPGPQPLGPQPVHR. The a.T hook 2 DNA-binding region spans 2936–2948; that stretch reads KRRRGRPPKARDL. Residues 2953–2965 show a composition bias toward polar residues; that stretch reads TISSAGDGNSESR. Residues 2967–2982 are compositionally biased toward pro residues; it reads QPPPHPSPLTPLPPLL. Residues 2983-3002 are compositionally biased toward low complexity; it reads VCPTATVANTVTTVTISTSP. Residues 3004–3016 constitute a DNA-binding region (a.T hook 3); sequence KRKRGRPPKNPPS. Positions 3011 to 3020 are enriched in pro residues; that stretch reads PKNPPSPRPS. Over residues 3044–3053 the composition is skewed to low complexity; that stretch reads PQGQGESEGS. The segment covering 3168–3184 has biased composition (acidic residues); the sequence is SVEESEAEASGEEEEGD.

Belongs to the SNF2/RAD54 helicase family. SWR1 subfamily. Interacts with CREBBP and EP300. May be part of a complex containing SRCAP, CREBBP, CARM1 and GRIP1. Component of the chromatin-remodeling SRCAP complex composed of at least SRCAP, DMAP1, RUVBL1, RUVBL2, ACTL6A, YEATS4, VPS72, ACTR6 and ZNHIT1. Component of a NuA4-related complex which contains EP400, TRRAP/PAF400, SRCAP, BRD8/SMAP, EPC1, DMAP1/DNMAP1, RUVBL1/TIP49, RUVBL2, actin, ACTL6A/BAF53A, VPS72 and YEATS4/GAS41. As to quaternary structure, (Microbial infection) Interacts with hepatitis C virus (HCV) NS5A. In terms of assembly, (Microbial infection) Interacts with human adenovirus 2 DBP.

Its subcellular location is the nucleus. Its function is as follows. Catalytic component of the SRCAP complex which mediates the ATP-dependent exchange of histone H2AZ/H2B dimers for nucleosomal H2A/H2B, leading to transcriptional regulation of selected genes by chromatin remodeling. Acts as a coactivator for CREB-mediated transcription, steroid receptor-mediated transcription, and Notch-mediated transcription. In Homo sapiens (Human), this protein is Helicase SRCAP (SRCAP).